The chain runs to 365 residues: Isoflavone 4'-O-methyltransferase (365 aa).

Residues 207–210 (VAGG), Asp231, 231–232 (DQ), 251–252 (DM), and Lys265 each bind S-adenosyl-L-methionine. The active-site Proton acceptor is the His269.

This sequence belongs to the class I-like SAM-binding methyltransferase superfamily. Cation-independent O-methyltransferase family. COMT subfamily.

It catalyses the reaction a 4'-hydroxyisoflavone + S-adenosyl-L-methionine = a 4'-methoxyisoflavone + S-adenosyl-L-homocysteine + H(+). The enzyme catalyses (2R,3S)-2,4',7-trihydroxyisoflavanone + S-adenosyl-L-methionine = (2R,3S)-2,7-dihydroxy-4'-methoxyisoflavanone + S-adenosyl-L-homocysteine + H(+). 2-hydroxyisoflavanone 4'-O-methyltransferase involved in the biosynthesis of formononetin. Can use 2,7,4'-trihydroxyisoflavanone as substrate, but not daidzein. The polypeptide is Isoflavone 4'-O-methyltransferase (HI4'OMT) (Lotus japonicus (Lotus corniculatus var. japonicus)).